We begin with the raw amino-acid sequence, 369 residues long: Anhydro-N-acetylmuramic acid kinase (369 aa).

12–19 (GTSMDGVD) is an ATP binding site.

Belongs to the anhydro-N-acetylmuramic acid kinase family.

The enzyme catalyses 1,6-anhydro-N-acetyl-beta-muramate + ATP + H2O = N-acetyl-D-muramate 6-phosphate + ADP + H(+). Its pathway is amino-sugar metabolism; 1,6-anhydro-N-acetylmuramate degradation. It functions in the pathway cell wall biogenesis; peptidoglycan recycling. Catalyzes the specific phosphorylation of 1,6-anhydro-N-acetylmuramic acid (anhMurNAc) with the simultaneous cleavage of the 1,6-anhydro ring, generating MurNAc-6-P. Is required for the utilization of anhMurNAc either imported from the medium or derived from its own cell wall murein, and thus plays a role in cell wall recycling. The chain is Anhydro-N-acetylmuramic acid kinase from Shewanella loihica (strain ATCC BAA-1088 / PV-4).